The chain runs to 152 residues: Coiled-coil domain-containing protein 182 (152 aa).

Positions 46–109 (ADLEILQQKV…RLREEEDRGI (64 aa)) form a coiled coil.

This Mus musculus (Mouse) protein is Coiled-coil domain-containing protein 182 (Ccdc182).